A 360-amino-acid polypeptide reads, in one-letter code: UDP-N-acetylglucosamine--N-acetylmuramyl-(pentapeptide) pyrophosphoryl-undecaprenol N-acetylglucosamine transferase (360 aa).

UDP-N-acetyl-alpha-D-glucosamine-binding positions include 11-13 (TGG), N120, R161, S188, and Q282.

Belongs to the glycosyltransferase 28 family. MurG subfamily.

It is found in the cell inner membrane. The enzyme catalyses di-trans,octa-cis-undecaprenyl diphospho-N-acetyl-alpha-D-muramoyl-L-alanyl-D-glutamyl-meso-2,6-diaminopimeloyl-D-alanyl-D-alanine + UDP-N-acetyl-alpha-D-glucosamine = di-trans,octa-cis-undecaprenyl diphospho-[N-acetyl-alpha-D-glucosaminyl-(1-&gt;4)]-N-acetyl-alpha-D-muramoyl-L-alanyl-D-glutamyl-meso-2,6-diaminopimeloyl-D-alanyl-D-alanine + UDP + H(+). It functions in the pathway cell wall biogenesis; peptidoglycan biosynthesis. Functionally, cell wall formation. Catalyzes the transfer of a GlcNAc subunit on undecaprenyl-pyrophosphoryl-MurNAc-pentapeptide (lipid intermediate I) to form undecaprenyl-pyrophosphoryl-MurNAc-(pentapeptide)GlcNAc (lipid intermediate II). The chain is UDP-N-acetylglucosamine--N-acetylmuramyl-(pentapeptide) pyrophosphoryl-undecaprenol N-acetylglucosamine transferase from Synechococcus sp. (strain RCC307).